The sequence spans 117 residues: Large ribosomal subunit protein uL18 (117 aa).

The protein belongs to the universal ribosomal protein uL18 family. Part of the 50S ribosomal subunit; part of the 5S rRNA/L5/L18/L25 subcomplex. Contacts the 5S and 23S rRNAs.

In terms of biological role, this is one of the proteins that bind and probably mediate the attachment of the 5S RNA into the large ribosomal subunit, where it forms part of the central protuberance. This chain is Large ribosomal subunit protein uL18, found in Polynucleobacter necessarius subsp. necessarius (strain STIR1).